The sequence spans 85 residues: Beta-insect depressant toxin Lqh-dprIT3f (85 aa).

The N-terminal stretch at 1 to 21 (MKLLLLLTISASMLIEGLVNA) is a signal peptide. The 61-residue stretch at 22 to 82 (DGYIRGGDGC…EWDYETDTCG (61 aa)) folds into the LCN-type CS-alpha/beta domain. Cystine bridges form between cysteine 31/cysteine 81, cysteine 35/cysteine 56, cysteine 42/cysteine 63, and cysteine 46/cysteine 65. Glycine 82 is subject to Glycine amide.

This sequence belongs to the long (4 C-C) scorpion toxin superfamily. Sodium channel inhibitor family. Beta subfamily. In terms of tissue distribution, expressed by the venom gland.

The protein resides in the secreted. In terms of biological role, depressant insect beta-toxins cause a transient contraction paralysis followed by a slow flaccid paralysis. They bind voltage-independently at site-4 of sodium channels (Nav) and block action potentials, primarily by depolarizing the axonal membrane and suppressing the sodium current. This depressant toxin is active only on insects. It is found in a relatively small amount in the venom. In Leiurus hebraeus (Hebrew deathstalker scorpion), this protein is Beta-insect depressant toxin Lqh-dprIT3f.